The chain runs to 199 residues: NAD(P)H dehydrogenase (quinone) (199 aa).

Residues 4–190 (MLVLYYSAYG…DGARFQGRRV (187 aa)) enclose the Flavodoxin-like domain. Residues 10–15 (SAYGHM) and 78–80 (TRY) each bind FMN. Tyr12 provides a ligand contact to NAD(+). A substrate-binding site is contributed by Trp98. FMN is bound by residues 113–119 (STATQYG) and His134. Residues 161 to 181 (YGMTTTADGDGSRQPSAQELD) form a disordered region. Over residues 163 to 177 (MTTTADGDGSRQPSA) the composition is skewed to polar residues.

The protein belongs to the WrbA family. The cofactor is FMN.

It catalyses the reaction a quinone + NADH + H(+) = a quinol + NAD(+). It carries out the reaction a quinone + NADPH + H(+) = a quinol + NADP(+). This Brucella canis (strain ATCC 23365 / NCTC 10854 / RM-666) protein is NAD(P)H dehydrogenase (quinone).